The following is a 379-amino-acid chain: 1-deoxy-D-xylulose 5-phosphate reductoisomerase (379 aa).

5 residues coordinate NADPH: Thr-10, Gly-11, Ser-12, Val-13, and Asn-121. Lys-122 lines the 1-deoxy-D-xylulose 5-phosphate pocket. Glu-123 serves as a coordination point for NADPH. Asp-147 is a Mn(2+) binding site. The 1-deoxy-D-xylulose 5-phosphate site is built by Ser-148, Glu-149, Ser-173, and His-196. Residue Glu-149 participates in Mn(2+) binding. Position 202 (Gly-202) interacts with NADPH. Positions 209, 214, 215, and 218 each coordinate 1-deoxy-D-xylulose 5-phosphate. Glu-218 lines the Mn(2+) pocket.

It belongs to the DXR family. Mg(2+) is required as a cofactor. It depends on Mn(2+) as a cofactor.

The catalysed reaction is 2-C-methyl-D-erythritol 4-phosphate + NADP(+) = 1-deoxy-D-xylulose 5-phosphate + NADPH + H(+). Its pathway is isoprenoid biosynthesis; isopentenyl diphosphate biosynthesis via DXP pathway; isopentenyl diphosphate from 1-deoxy-D-xylulose 5-phosphate: step 1/6. Catalyzes the NADPH-dependent rearrangement and reduction of 1-deoxy-D-xylulose-5-phosphate (DXP) to 2-C-methyl-D-erythritol 4-phosphate (MEP). This chain is 1-deoxy-D-xylulose 5-phosphate reductoisomerase, found in Chlamydia abortus (strain DSM 27085 / S26/3) (Chlamydophila abortus).